The sequence spans 418 residues: Actin-related protein 3 (418 aa).

Position 2 is an N-acetylalanine (Ala-2). An N6-acetyllysine mark is found at Lys-240, Lys-244, Lys-251, and Lys-254.

The protein belongs to the actin family. ARP3 subfamily. As to quaternary structure, component of the Arp2/3 complex composed of ACTR2/ARP2, ACTR3/ARP3, ARPC1B/p41-ARC, ARPC2/p34-ARC, ARPC3/p21-ARC, ARPC4/p20-ARC and ARPC5/p16-ARC. Interacts with WHDC1. Interacts weakly with MEFV. Interacts with AVIL. (Microbial infection) Interacts with bacterium B.thailandensis BimA.

Its subcellular location is the cytoplasm. The protein localises to the cytoskeleton. It is found in the cell projection. The protein resides in the nucleus. Functionally, ATP-binding component of the Arp2/3 complex, a multiprotein complex that mediates actin polymerization upon stimulation by nucleation-promoting factor (NPF). The Arp2/3 complex mediates the formation of branched actin networks in the cytoplasm, providing the force for cell motility. Seems to contact the pointed end of the daughter actin filament. In podocytes, required for the formation of lamellipodia downstream of AVIL and PLCE1 regulation. In addition to its role in the cytoplasmic cytoskeleton, the Arp2/3 complex also promotes actin polymerization in the nucleus, thereby regulating gene transcription and repair of damaged DNA. The Arp2/3 complex promotes homologous recombination (HR) repair in response to DNA damage by promoting nuclear actin polymerization, leading to drive motility of double-strand breaks (DSBs). Plays a role in ciliogenesis. This Mus musculus (Mouse) protein is Actin-related protein 3 (Actr3).